The primary structure comprises 206 residues: Accelerated cell death 11 (206 aa).

Residues Asp-60, Lys-64, Arg-99, Arg-103, and His-143 each coordinate an N-acylsphingoid base 1-phosphate.

The protein belongs to the GLTP family. As to quaternary structure, interacts with BPA1, PRA1F2 and PRA1F3.

The protein resides in the cytoplasm. Its function is as follows. Exhibits selective intermembrane transfer of ceramide-1-phosphate (C1P) and phytoceramide-1-phosphate. Does not transport ceramide (Cer) or GalCer, suggesting a requirement for phosphate in the headgroup for functionality. Transports in vitro sphingosine, but not glycosphingolipids. Also has some in vitro activity with sphingomyelin, a lipid not detected in plant tissues. The transport function may be not directly involved in regulating cell death. Rather, perturbations in the function of ACD11 or related components could be monitored by R-proteins, which then mediate defense and programmed cell death (PCD), as proposed in the guard hypothesis. C1P transfer is stimulated by phosphatidylserine in C1P source vesicles. Regulates autophagy, inflammasome mediated IL1B and IL18 processing, and pyroptosis, but not apoptosis. The sequence is that of Accelerated cell death 11 from Arabidopsis thaliana (Mouse-ear cress).